The following is a 111-amino-acid chain: Dormancy-associated protein 1 (111 aa).

A disordered region spans residues 30-60 (KDDGASNQLMRSTSIPTTPTTPVTPTTPSSA). A compositionally biased stretch (low complexity) spans 41–59 (STSIPTTPTTPVTPTTPSS).

Belongs to the DRM1/ARP family. In terms of tissue distribution, expressed in axilary buds and in non-growing stems and roots. Detected in sepals, stamens and carpels, but barely detected in petals or leaflets.

The sequence is that of Dormancy-associated protein 1 from Pisum sativum (Garden pea).